The primary structure comprises 204 residues: Large ribosomal subunit protein eL15A (204 aa).

The segment at 164 to 185 (LTATGKKSRGINKGHKFNNTKA) is disordered. Positions 169 to 185 (KKSRGINKGHKFNNTKA) are enriched in basic residues.

It belongs to the eukaryotic ribosomal protein eL15 family. Component of the large ribosomal subunit (LSU). Mature yeast ribosomes consist of a small (40S) and a large (60S) subunit. The 40S small subunit contains 1 molecule of ribosomal RNA (18S rRNA) and 33 different proteins (encoded by 57 genes). The large 60S subunit contains 3 rRNA molecules (25S, 5.8S and 5S rRNA) and 46 different proteins (encoded by 81 genes).

Its subcellular location is the cytoplasm. In terms of biological role, component of the ribosome, a large ribonucleoprotein complex responsible for the synthesis of proteins in the cell. The small ribosomal subunit (SSU) binds messenger RNAs (mRNAs) and translates the encoded message by selecting cognate aminoacyl-transfer RNA (tRNA) molecules. The large subunit (LSU) contains the ribosomal catalytic site termed the peptidyl transferase center (PTC), which catalyzes the formation of peptide bonds, thereby polymerizing the amino acids delivered by tRNAs into a polypeptide chain. The nascent polypeptides leave the ribosome through a tunnel in the LSU and interact with protein factors that function in enzymatic processing, targeting, and the membrane insertion of nascent chains at the exit of the ribosomal tunnel. In Saccharomyces cerevisiae (strain ATCC 204508 / S288c) (Baker's yeast), this protein is Large ribosomal subunit protein eL15A.